The primary structure comprises 86 residues: uncharacterized protein (86 aa).

This is an uncharacterized protein from Dictyostelium discoideum (Social amoeba).